A 156-amino-acid polypeptide reads, in one-letter code: Small ribosomal subunit protein uS7 (156 aa).

Belongs to the universal ribosomal protein uS7 family. In terms of assembly, part of the 30S ribosomal subunit. Contacts proteins S9 and S11.

Functionally, one of the primary rRNA binding proteins, it binds directly to 16S rRNA where it nucleates assembly of the head domain of the 30S subunit. Is located at the subunit interface close to the decoding center, probably blocks exit of the E-site tRNA. This is Small ribosomal subunit protein uS7 from Acetivibrio thermocellus (strain ATCC 27405 / DSM 1237 / JCM 9322 / NBRC 103400 / NCIMB 10682 / NRRL B-4536 / VPI 7372) (Clostridium thermocellum).